Here is a 479-residue protein sequence, read N- to C-terminus: Probable cytosol aminopeptidase (479 aa).

2 residues coordinate Mn(2+): lysine 247 and aspartate 252. Lysine 259 is an active-site residue. Mn(2+) is bound by residues aspartate 270, aspartate 329, and glutamate 331. The active site involves arginine 333.

It belongs to the peptidase M17 family. Mn(2+) serves as cofactor.

It localises to the cytoplasm. The enzyme catalyses Release of an N-terminal amino acid, Xaa-|-Yaa-, in which Xaa is preferably Leu, but may be other amino acids including Pro although not Arg or Lys, and Yaa may be Pro. Amino acid amides and methyl esters are also readily hydrolyzed, but rates on arylamides are exceedingly low.. It carries out the reaction Release of an N-terminal amino acid, preferentially leucine, but not glutamic or aspartic acids.. Its function is as follows. Presumably involved in the processing and regular turnover of intracellular proteins. Catalyzes the removal of unsubstituted N-terminal amino acids from various peptides. The chain is Probable cytosol aminopeptidase from Vesicomyosocius okutanii subsp. Calyptogena okutanii (strain HA).